A 356-amino-acid polypeptide reads, in one-letter code: Ubiquitin-conjugating enzyme E2 Z (356 aa).

The segment covering M1–A16 has biased composition (low complexity). The disordered stretch occupies residues M1–G22. Positions Q101 to V255 constitute a UBC core domain. C190 (glycyl thioester intermediate) is an active-site residue. The segment at N334 to V356 is disordered. A Phosphoserine modification is found at S339.

The protein belongs to the ubiquitin-conjugating enzyme family.

It is found in the cytoplasm. It localises to the nucleus. The catalysed reaction is S-ubiquitinyl-[E1 ubiquitin-activating enzyme]-L-cysteine + [E2 ubiquitin-conjugating enzyme]-L-cysteine = [E1 ubiquitin-activating enzyme]-L-cysteine + S-ubiquitinyl-[E2 ubiquitin-conjugating enzyme]-L-cysteine.. Its pathway is protein modification; protein ubiquitination. In terms of biological role, catalyzes the covalent attachment of ubiquitin to other proteins. Specific substrate for UBA6, not charged with ubiquitin by UBE1. May be involved in apoptosis regulation. This chain is Ubiquitin-conjugating enzyme E2 Z (Ube2z), found in Rattus norvegicus (Rat).